The following is a 49-amino-acid chain: Putative DNA-directed RNA polymerase subunit omega (49 aa).

It belongs to the RNA polymerase subunit omega family.

The protein localises to the plastid. It is found in the chloroplast. It catalyses the reaction RNA(n) + a ribonucleoside 5'-triphosphate = RNA(n+1) + diphosphate. Its function is as follows. May be involved in RNA polymerase activity. This Cyanidioschyzon merolae (strain NIES-3377 / 10D) (Unicellular red alga) protein is Putative DNA-directed RNA polymerase subunit omega (rpoZ).